Reading from the N-terminus, the 316-residue chain is Thymidylate synthase (316 aa).

Residues Arg23 and 178 to 179 (RR) contribute to the dUMP site. Cys198 functions as the Nucleophile in the catalytic mechanism. Residues 218–221 (RSGD), Asn229, and 259–261 (HIY) each bind dUMP. Asp221 is a binding site for (6R)-5,10-methylene-5,6,7,8-tetrahydrofolate. Position 315 (Ala315) interacts with (6R)-5,10-methylene-5,6,7,8-tetrahydrofolate.

This sequence belongs to the thymidylate synthase family. Bacterial-type ThyA subfamily. In terms of assembly, homodimer.

Its subcellular location is the cytoplasm. The enzyme catalyses dUMP + (6R)-5,10-methylene-5,6,7,8-tetrahydrofolate = 7,8-dihydrofolate + dTMP. The protein operates within pyrimidine metabolism; dTTP biosynthesis. Its function is as follows. Catalyzes the reductive methylation of 2'-deoxyuridine-5'-monophosphate (dUMP) to 2'-deoxythymidine-5'-monophosphate (dTMP) while utilizing 5,10-methylenetetrahydrofolate (mTHF) as the methyl donor and reductant in the reaction, yielding dihydrofolate (DHF) as a by-product. This enzymatic reaction provides an intracellular de novo source of dTMP, an essential precursor for DNA biosynthesis. This is Thymidylate synthase from Latilactobacillus sakei subsp. sakei (strain 23K) (Lactobacillus sakei subsp. sakei).